The sequence spans 328 residues: Flap endonuclease 1 (328 aa).

Residues 1 to 98 (MGVKFKDITN…ETQEERINIK (98 aa)) form an N-domain region. Mg(2+) contacts are provided by D27, D80, E152, E154, D173, D175, and D227. Residues 116–248 (AARKYAARTT…KGIKLIHKYG (133 aa)) are I-domain. The tract at residues 320–328 (AQSSLEDWF) is interaction with PCNA.

This sequence belongs to the XPG/RAD2 endonuclease family. FEN1 subfamily. In terms of assembly, interacts with PCNA. PCNA stimulates the nuclease activity without altering cleavage specificity. Mg(2+) serves as cofactor.

Its function is as follows. Structure-specific nuclease with 5'-flap endonuclease and 5'-3' exonuclease activities involved in DNA replication and repair. During DNA replication, cleaves the 5'-overhanging flap structure that is generated by displacement synthesis when DNA polymerase encounters the 5'-end of a downstream Okazaki fragment. Binds the unpaired 3'-DNA end and kinks the DNA to facilitate 5' cleavage specificity. Cleaves one nucleotide into the double-stranded DNA from the junction in flap DNA, leaving a nick for ligation. Also involved in the base excision repair (BER) pathway. Acts as a genome stabilization factor that prevents flaps from equilibrating into structures that lead to duplications and deletions. Also possesses 5'-3' exonuclease activity on nicked or gapped double-stranded DNA. This is Flap endonuclease 1 from Methanosphaera stadtmanae (strain ATCC 43021 / DSM 3091 / JCM 11832 / MCB-3).